Consider the following 622-residue polypeptide: UvrABC system protein C (622 aa).

The GIY-YIG domain maps to 13–92 (DKPGVYLMKN…IKKYRPRYNI (80 aa)). One can recognise a UVR domain in the interval 204 to 239 (KDIIRKLKEDMDTLSENMEFEKAAELRDKIFALEKI).

Belongs to the UvrC family. As to quaternary structure, interacts with UvrB in an incision complex.

The protein localises to the cytoplasm. The UvrABC repair system catalyzes the recognition and processing of DNA lesions. UvrC both incises the 5' and 3' sides of the lesion. The N-terminal half is responsible for the 3' incision and the C-terminal half is responsible for the 5' incision. This Clostridium kluyveri (strain ATCC 8527 / DSM 555 / NBRC 12016 / NCIMB 10680 / K1) protein is UvrABC system protein C.